We begin with the raw amino-acid sequence, 99 residues long: Probable small ribosomal subunit protein cS23 (99 aa).

The protein belongs to the chloroplast-specific ribosomal protein cS23 family. Part of the 30S ribosomal subunit.

Its function is as follows. Probably a ribosomal protein or a ribosome-associated protein. This Synechococcus sp. (strain JA-2-3B'a(2-13)) (Cyanobacteria bacterium Yellowstone B-Prime) protein is Probable small ribosomal subunit protein cS23.